The chain runs to 148 residues: Troponin C (148 aa).

4 EF-hand domains span residues 8–43 (KQFN…LALH), 44–79 (VSDD…KVQE), 81–116 (EDER…LGDD), and 117–148 (LNDD…LMLG). Residues Asp130, Asp132, Ser134, Thr136, and Glu141 each contribute to the Ca(2+) site.

Belongs to the troponin C family.

Its function is as follows. Troponin is the central regulatory protein of striated muscle contraction. Tn consists of three components: Tn-I which is the inhibitor of actomyosin ATPase, Tn-T which contains the binding site for tropomyosin and Tn-C. The binding of calcium to Tn-C abolishes the inhibitory action of Tn on actin filaments. In Todarodes pacificus (Japanese flying squid), this protein is Troponin C.